Here is a 134-residue protein sequence, read N- to C-terminus: ATP synthase epsilon chain (134 aa).

The protein belongs to the ATPase epsilon chain family. F-type ATPases have 2 components, CF(1) - the catalytic core - and CF(0) - the membrane proton channel. CF(1) has five subunits: alpha(3), beta(3), gamma(1), delta(1), epsilon(1). CF(0) has three main subunits: a, b and c.

The protein localises to the cell inner membrane. Produces ATP from ADP in the presence of a proton gradient across the membrane. The sequence is that of ATP synthase epsilon chain from Nitratidesulfovibrio vulgaris (strain DSM 19637 / Miyazaki F) (Desulfovibrio vulgaris).